The sequence spans 697 residues: Sentrin-specific protease (697 aa).

A compositionally biased stretch (basic and acidic residues) spans 1 to 14; sequence MSRRSDLSDKDSQS. Disordered stretches follow at residues 1–47 and 365–387; these read MSRR…QGLG and SEESTSSSYRQHARSNSSESDSY. The Nuclear localization signal signature appears at 15–19; the sequence is RKRHW. Residues 462-467 carry the Nuclear localization signal motif; the sequence is KVEKKK. The interval 501 to 664 is protease; it reads IQICKKDLAT…VFSCQFGEWA (164 aa). Catalysis depends on residues H585, D602, and C653.

It belongs to the peptidase C48 family.

The protein resides in the nucleus envelope. Functionally, protease that deconjugates smo-1 from targeted proteins and may catalyze the processing of smo-1 to its mature form. The chain is Sentrin-specific protease (ulp-1) from Caenorhabditis elegans.